A 425-amino-acid polypeptide reads, in one-letter code: Adenylosuccinate synthetase (425 aa).

GTP contacts are provided by residues 12–18 and 40–42; these read GDEGKAK and GHT. Aspartate 13 serves as the catalytic Proton acceptor. Residues aspartate 13 and glycine 40 each coordinate Mg(2+). IMP contacts are provided by residues 13 to 16, 38 to 41, threonine 130, arginine 144, glutamine 224, threonine 239, and arginine 303; these read DEGK and NAGH. The active-site Proton donor is the histidine 41. A substrate-binding site is contributed by 299–305; it reads ATTGRPR. Residues arginine 305, 331–333, and 411–413 each bind GTP; these read KID and STG.

It belongs to the adenylosuccinate synthetase family. Homodimer. The cofactor is Mg(2+).

It localises to the cytoplasm. It catalyses the reaction IMP + L-aspartate + GTP = N(6)-(1,2-dicarboxyethyl)-AMP + GDP + phosphate + 2 H(+). It functions in the pathway purine metabolism; AMP biosynthesis via de novo pathway; AMP from IMP: step 1/2. Functionally, plays an important role in the de novo pathway of purine nucleotide biosynthesis. Catalyzes the first committed step in the biosynthesis of AMP from IMP. In Leptospira interrogans serogroup Icterohaemorrhagiae serovar copenhageni (strain Fiocruz L1-130), this protein is Adenylosuccinate synthetase.